Consider the following 1160-residue polypeptide: AF4/FMR2 family member 4 (1160 aa).

The segment covering 1 to 19 (MNREDRNVLRMKERERRNQ) has biased composition (basic and acidic residues). 4 disordered regions span residues 1 to 42 (MNRE…YKVT), 78 to 289 (PKPA…SKAH), 322 to 908 (WPPP…FDDR), and 1031 to 1070 (NSYS…SSGG). Polar residues predominate over residues 115-128 (PSTSQSQKRSSALQ). Position 120 is a phosphoserine (S120). Positions 172–189 (RSSSPGKPQAVSSLSSSH) are enriched in low complexity. Positions 193–212 (HGNDHHSKEHQRSKSPRDPD) are enriched in basic and acidic residues. S207 carries the post-translational modification Phosphoserine. The span at 229–247 (SSQSFPPSLMSKSSSMLQK) shows a compositional bias: low complexity. Composition is skewed to polar residues over residues 268–280 (EHYS…NSMT) and 360–370 (YSTAKTSNGHQ). A phosphoserine mark is found at S382, S383, S384, and S387. Residues 398-407 (PRSTPGSNSE) show a composition bias toward polar residues. The span at 408–424 (PSHHNSEGADNSRDDSS) shows a compositional bias: basic and acidic residues. Low complexity predominate over residues 425 to 457 (SHSGSESSSGSDSESESSSSDSEANEPSQSASP). S482, S485, and S486 each carry phosphoserine. Polar residues-rich tracts occupy residues 483–496 (PASS…SSQA), 505–523 (GTAS…SSAT), and 544–555 (SPAQSDSTTQRR). The residue at position 544 (S544) is a Phosphoserine. Over residues 563 to 581 (KKPEKSAAEEPRGGLKIES) the composition is skewed to basic and acidic residues. K578 participates in a covalent cross-link: Glycyl lysine isopeptide (Lys-Gly) (interchain with G-Cter in SUMO2). Residues 594 to 607 (SRHKAATKGSRKPN) show a composition bias toward basic residues. Residues 608 to 622 (IKKESKSSPRPTAEK) are compositionally biased toward basic and acidic residues. A compositionally biased stretch (low complexity) spans 641-657 (TDTSSSDSDGSESLPPS). S666 bears the Phosphoserine mark. Residue T669 is modified to Phosphothreonine. 4 positions are modified to phosphoserine: S675, S689, S698, and S701. Position 707 is a phosphotyrosine (Y707). Composition is skewed to basic and acidic residues over residues 725 to 756 (PYKE…EKAS), 764 to 784 (KNDD…DKNS), and 794 to 806 (ESSK…EKDL). The residue at position 809 (S809) is a Phosphoserine. An N6-acetyllysine modification is found at K817. Position 831 is a phosphoserine (S831). Composition is skewed to low complexity over residues 831–859 (SQSS…SSTA) and 880–895 (PNSS…TSES). Residues S1040, S1052, S1055, and S1059 each carry the phosphoserine modification. Residues 1059 to 1070 (SPGNSGSYSSGG) are compositionally biased toward low complexity.

This sequence belongs to the AF4 family. In terms of assembly, component of the super elongation complex (SEC), at least composed of EAF1, EAF2, CDK9, MLLT3/AF9, AFF (AFF1 or AFF4), the P-TEFb complex and ELL (ELL, ELL2 or ELL3). Interacts with ELL2; the interaction is direct and leads to stabilize ELL2 and prevent ELL2 ubiquitination and degradation. Interacts with ELL3; the interaction is direct. Dephosphorylated at Ser-544 by the PNUTS-PP1 complex, promoting RNA polymerase II transcription pause-release. Highly expressed in testis by Sertoli cells, and at low levels in other tissues.

It is found in the nucleus. It localises to the chromosome. Key component of the super elongation complex (SEC), a complex required to increase the catalytic rate of RNA polymerase II transcription by suppressing transient pausing by the polymerase at multiple sites along the DNA. In the SEC complex, AFF4 acts as a central scaffold that recruits other factors through direct interactions with ELL proteins (ELL, ELL2 or ELL3) and the P-TEFb complex. The polypeptide is AF4/FMR2 family member 4 (Aff4) (Mus musculus (Mouse)).